Reading from the N-terminus, the 281-residue chain is Bifunctional N-acyl-homoserine lactone acylase/prephenate dehydratase (281 aa).

In terms of domain architecture, Prephenate dehydratase spans 6–181; sequence IIAFQGRPGA…NTTRFYIASR (176 aa). The ACT domain occupies 196-273; sequence TLLFRVNNQP…EQQEILGVYP (78 aa). L-phenylalanine-binding residues include A207, L208, N221, and M222.

Homodimer.

The catalysed reaction is an N-acyl-L-homoserine lactone + H2O = L-homoserine lactone + a carboxylate. The enzyme catalyses prephenate + H(+) = 3-phenylpyruvate + CO2 + H2O. The protein operates within amino-acid biosynthesis; L-phenylalanine biosynthesis; phenylpyruvate from prephenate: step 1/1. Its function is as follows. Multifunctional enzyme that acts on N-acyl-homoserine lactones (AHLs), beta-lactam antibiotics and shows prephenate dehydratase activity. Acts as an acylase on AHL and hydrolyzes the amide bond of the acyl side-chain of AHL molecules, releasing homoserine lactone (HSL) and the fatty acid. Can use different 3-oxo-acyl homoserine lactones, such as 3-oxo-decanoyl homoserine lactone, which is the preferred substrate, 3-oxo-octanoyl homoserine lactone, 3-oxo-hexanoyl homoserine lactone and 3-oxo-dodecanoyl homoserine lactone. It can also degrade various beta-lactam antibiotics, including penicillin G, amoxicillin and ampicillin, but not cefotaxime. In addition, it can complement a phenylalanine auxotrophic E.coli mutant, which carries a kanamycin gene inserted into pheA, suggesting that GqqA can also function as a prephenate dehydratase. Involved in bacterial quorum quenching (QQ) and cellulose biofilm formation. The protein is Bifunctional N-acyl-homoserine lactone acylase/prephenate dehydratase of Komagataeibacter europaeus (Gluconacetobacter europaeus).